Consider the following 256-residue polypeptide: Ubiquinone/menaquinone biosynthesis C-methyltransferase UbiE (256 aa).

Residues Thr79, Asp100, and 128 to 129 contribute to the S-adenosyl-L-methionine site; that span reads DA.

It belongs to the class I-like SAM-binding methyltransferase superfamily. MenG/UbiE family.

It carries out the reaction a 2-demethylmenaquinol + S-adenosyl-L-methionine = a menaquinol + S-adenosyl-L-homocysteine + H(+). It catalyses the reaction a 2-methoxy-6-(all-trans-polyprenyl)benzene-1,4-diol + S-adenosyl-L-methionine = a 5-methoxy-2-methyl-3-(all-trans-polyprenyl)benzene-1,4-diol + S-adenosyl-L-homocysteine + H(+). The protein operates within quinol/quinone metabolism; menaquinone biosynthesis; menaquinol from 1,4-dihydroxy-2-naphthoate: step 2/2. Its pathway is cofactor biosynthesis; ubiquinone biosynthesis. Its function is as follows. Methyltransferase required for the conversion of demethylmenaquinol (DMKH2) to menaquinol (MKH2) and the conversion of 2-polyprenyl-6-methoxy-1,4-benzoquinol (DDMQH2) to 2-polyprenyl-3-methyl-6-methoxy-1,4-benzoquinol (DMQH2). The polypeptide is Ubiquinone/menaquinone biosynthesis C-methyltransferase UbiE (Pseudomonas savastanoi pv. phaseolicola (strain 1448A / Race 6) (Pseudomonas syringae pv. phaseolicola (strain 1448A / Race 6))).